Consider the following 56-residue polypeptide: MAHENVWFSHPRRFGKGSRQCRVCSSHTGLVRKYDLNICRQCFREKANDIGFHKYR.

Zn(2+)-binding residues include C21 and C24. A Phosphoserine modification is found at S25. Zn(2+) contacts are provided by C39 and C42.

The protein belongs to the universal ribosomal protein uS14 family. In terms of assembly, component of the small ribosomal subunit (SSU). Mature yeast ribosomes consist of a small (40S) and a large (60S) subunit. The 40S small subunit contains 1 molecule of ribosomal RNA (18S rRNA) and 33 different proteins (encoded by 57 genes). The large 60S subunit contains 3 rRNA molecules (25S, 5.8S and 5S rRNA) and 46 different proteins (encoded by 81 genes). The cofactor is Zn(2+).

It is found in the cytoplasm. Component of the ribosome, a large ribonucleoprotein complex responsible for the synthesis of proteins in the cell. The small ribosomal subunit (SSU) binds messenger RNAs (mRNAs) and translates the encoded message by selecting cognate aminoacyl-transfer RNA (tRNA) molecules. The large subunit (LSU) contains the ribosomal catalytic site termed the peptidyl transferase center (PTC), which catalyzes the formation of peptide bonds, thereby polymerizing the amino acids delivered by tRNAs into a polypeptide chain. The nascent polypeptides leave the ribosome through a tunnel in the LSU and interact with protein factors that function in enzymatic processing, targeting, and the membrane insertion of nascent chains at the exit of the ribosomal tunnel. In Saccharomyces cerevisiae (strain ATCC 204508 / S288c) (Baker's yeast), this protein is Small ribosomal subunit protein uS14B.